Reading from the N-terminus, the 254-residue chain is Type III pantothenate kinase (254 aa).

An ATP-binding site is contributed by 6 to 13 (DVGNTNIV). Substrate is bound by residues Phe-100 and 107–110 (GADR). Catalysis depends on Asp-109, which acts as the Proton acceptor. Residue Asp-129 participates in K(+) binding. Thr-132 is an ATP binding site. Thr-184 contributes to the substrate binding site.

It belongs to the type III pantothenate kinase family. In terms of assembly, homodimer. NH4(+) serves as cofactor. It depends on K(+) as a cofactor.

Its subcellular location is the cytoplasm. The catalysed reaction is (R)-pantothenate + ATP = (R)-4'-phosphopantothenate + ADP + H(+). The protein operates within cofactor biosynthesis; coenzyme A biosynthesis; CoA from (R)-pantothenate: step 1/5. Catalyzes the phosphorylation of pantothenate (Pan), the first step in CoA biosynthesis. The chain is Type III pantothenate kinase from Moorella thermoacetica (strain ATCC 39073 / JCM 9320).